The primary structure comprises 161 residues: Nucleotide-binding protein SO_3815 (161 aa).

It belongs to the YajQ family.

In terms of biological role, nucleotide-binding protein. The chain is Nucleotide-binding protein SO_3815 from Shewanella oneidensis (strain ATCC 700550 / JCM 31522 / CIP 106686 / LMG 19005 / NCIMB 14063 / MR-1).